A 667-amino-acid polypeptide reads, in one-letter code: DNA ligase (667 aa).

Residues 32 to 36, 81 to 82, and Glu110 each bind NAD(+); these read DSEYD and SL. The active-site N6-AMP-lysine intermediate is the Lys112. 4 residues coordinate NAD(+): Arg133, Glu167, Lys283, and Lys307. Cys401, Cys404, Cys419, and Cys424 together coordinate Zn(2+). The 82-residue stretch at 586-667 folds into the BRCT domain; it reads EGHPEFSGKT…FVDKQNELNS (82 aa).

The protein belongs to the NAD-dependent DNA ligase family. LigA subfamily. Mg(2+) is required as a cofactor. Mn(2+) serves as cofactor.

The catalysed reaction is NAD(+) + (deoxyribonucleotide)n-3'-hydroxyl + 5'-phospho-(deoxyribonucleotide)m = (deoxyribonucleotide)n+m + AMP + beta-nicotinamide D-nucleotide.. DNA ligase that catalyzes the formation of phosphodiester linkages between 5'-phosphoryl and 3'-hydroxyl groups in double-stranded DNA using NAD as a coenzyme and as the energy source for the reaction. It is essential for DNA replication and repair of damaged DNA. In Staphylococcus aureus (strain Mu3 / ATCC 700698), this protein is DNA ligase.